We begin with the raw amino-acid sequence, 140 residues long: Nucleoside diphosphate kinase (140 aa).

Residues Lys-11, Phe-59, Arg-87, Thr-93, Arg-104, and Asn-114 each coordinate ATP. Residue His-117 is the Pros-phosphohistidine intermediate of the active site.

This sequence belongs to the NDK family. In terms of assembly, homotetramer. Requires Mg(2+) as cofactor.

Its subcellular location is the cytoplasm. It catalyses the reaction a 2'-deoxyribonucleoside 5'-diphosphate + ATP = a 2'-deoxyribonucleoside 5'-triphosphate + ADP. The catalysed reaction is a ribonucleoside 5'-diphosphate + ATP = a ribonucleoside 5'-triphosphate + ADP. Its function is as follows. Major role in the synthesis of nucleoside triphosphates other than ATP. The ATP gamma phosphate is transferred to the NDP beta phosphate via a ping-pong mechanism, using a phosphorylated active-site intermediate. This chain is Nucleoside diphosphate kinase, found in Methylocella silvestris (strain DSM 15510 / CIP 108128 / LMG 27833 / NCIMB 13906 / BL2).